Here is a 510-residue protein sequence, read N- to C-terminus: Light-independent protochlorophyllide reductase subunit B (510 aa).

Asp36 provides a ligand contact to [4Fe-4S] cluster. The Proton donor role is filled by Asp296. 431 to 432 (GM) is a binding site for substrate.

The protein belongs to the ChlB/BchB/BchZ family. Protochlorophyllide reductase is composed of three subunits; ChlL, ChlN and ChlB. Forms a heterotetramer of two ChlB and two ChlN subunits. Requires [4Fe-4S] cluster as cofactor.

The enzyme catalyses chlorophyllide a + oxidized 2[4Fe-4S]-[ferredoxin] + 2 ADP + 2 phosphate = protochlorophyllide a + reduced 2[4Fe-4S]-[ferredoxin] + 2 ATP + 2 H2O. Its pathway is porphyrin-containing compound metabolism; chlorophyll biosynthesis (light-independent). Functionally, component of the dark-operative protochlorophyllide reductase (DPOR) that uses Mg-ATP and reduced ferredoxin to reduce ring D of protochlorophyllide (Pchlide) to form chlorophyllide a (Chlide). This reaction is light-independent. The NB-protein (ChlN-ChlB) is the catalytic component of the complex. The protein is Light-independent protochlorophyllide reductase subunit B of Synechococcus sp. (strain JA-2-3B'a(2-13)) (Cyanobacteria bacterium Yellowstone B-Prime).